Reading from the N-terminus, the 383-residue chain is Serine protease 23 (383 aa).

Residues 1–23 form the signal peptide; the sequence is MAGIPGLLILLLVLLCVFMQVSP. A glycan (N-linked (GlcNAc...) asparagine) is linked at asparagine 93. A disulfide bridge links cysteine 160 with cysteine 176. The active-site Charge relay system is the histidine 175. Asparagine 207 carries N-linked (GlcNAc...) asparagine glycosylation. Catalysis depends on charge relay system residues aspartate 240 and serine 316.

Belongs to the peptidase S1 family.

It localises to the secreted. In Rattus norvegicus (Rat), this protein is Serine protease 23 (Prss23).